A 197-amino-acid chain; its full sequence is Peptide deformylase (197 aa).

Fe cation is bound by residues C106 and H148. The active site involves E149. H152 provides a ligand contact to Fe cation.

It belongs to the polypeptide deformylase family. Fe(2+) serves as cofactor.

The enzyme catalyses N-terminal N-formyl-L-methionyl-[peptide] + H2O = N-terminal L-methionyl-[peptide] + formate. Functionally, removes the formyl group from the N-terminal Met of newly synthesized proteins. Requires at least a dipeptide for an efficient rate of reaction. N-terminal L-methionine is a prerequisite for activity but the enzyme has broad specificity at other positions. The polypeptide is Peptide deformylase (Mycolicibacterium smegmatis (strain ATCC 700084 / mc(2)155) (Mycobacterium smegmatis)).